We begin with the raw amino-acid sequence, 123 residues long: MRIQSLLLLGALLAVGSQLPAVFGRKKGEKSGGCPPDDGPCLLSVPDQCVEDSQCPLTRKCCYRACFRQCVPRVSVKLGSCPEDQLRCLSPMNHLCHKDSDCSGKKRCCHSACGRDCRDPARG.

The signal sequence occupies residues 1–24 (MRIQSLLLLGALLAVGSQLPAVFG). 2 consecutive WAP domains span residues 27-73 (KGEK…CVPR) and 74-121 (VSVK…RDPA). Disulfide bonds link C34-C62, C41-C66, C49-C61, C55-C70, C81-C109, C88-C113, C96-C108, and C102-C117.

The protein localises to the secreted. Its function is as follows. Putative acid-stable proteinase inhibitor. The protein is WAP four-disulfide core domain protein 5 (WFDC5) of Pongo abelii (Sumatran orangutan).